We begin with the raw amino-acid sequence, 150 residues long: UPF0756 membrane protein CGSHiEE_06715 (150 aa).

Helical transmembrane passes span 1–21 (MTLQLNTIALLLVILLILGVL), 52–72 (YGVKIGIIILTIGVLSPLVSG), 81–101 (GFVSWKMALSISVGVLVAWLA), and 123–143 (IIGVAFLGGIPVGPLIAAGIL).

Belongs to the UPF0756 family.

Its subcellular location is the cell membrane. The chain is UPF0756 membrane protein CGSHiEE_06715 from Haemophilus influenzae (strain PittEE).